Reading from the N-terminus, the 106-residue chain is Large ribosomal subunit protein bL21 (106 aa).

The protein belongs to the bacterial ribosomal protein bL21 family. In terms of assembly, part of the 50S ribosomal subunit. Contacts protein L20.

Its function is as follows. This protein binds to 23S rRNA in the presence of protein L20. In Xylella fastidiosa (strain 9a5c), this protein is Large ribosomal subunit protein bL21.